Consider the following 394-residue polypeptide: Cysteine desulfurase IscS (394 aa).

Residues 72-73 (GT), Asn152, Gln180, and 200-202 (SAH) each bind pyridoxal 5'-phosphate. Lys203 carries the N6-(pyridoxal phosphate)lysine modification. Thr238 contributes to the pyridoxal 5'-phosphate binding site. Catalysis depends on Cys326, which acts as the Cysteine persulfide intermediate. Cys326 contributes to the [2Fe-2S] cluster binding site.

Belongs to the class-V pyridoxal-phosphate-dependent aminotransferase family. NifS/IscS subfamily. In terms of assembly, homodimer. Forms a heterotetramer with IscU, interacts with other sulfur acceptors. Pyridoxal 5'-phosphate serves as cofactor.

It localises to the cytoplasm. It carries out the reaction (sulfur carrier)-H + L-cysteine = (sulfur carrier)-SH + L-alanine. Its pathway is cofactor biosynthesis; iron-sulfur cluster biosynthesis. In terms of biological role, master enzyme that delivers sulfur to a number of partners involved in Fe-S cluster assembly, tRNA modification or cofactor biosynthesis. Catalyzes the removal of elemental sulfur atoms from cysteine to produce alanine. Functions as a sulfur delivery protein for Fe-S cluster synthesis onto IscU, an Fe-S scaffold assembly protein, as well as other S acceptor proteins. The polypeptide is Cysteine desulfurase IscS (Dictyoglomus turgidum (strain DSM 6724 / Z-1310)).